The primary structure comprises 228 residues: Ribose-5-phosphate isomerase A (228 aa).

Residues 31–34, 85–88, and 97–100 each bind substrate; these read TGST, DGAD, and KGGG. The Proton acceptor role is filled by Glu106. Lys124 provides a ligand contact to substrate.

This sequence belongs to the ribose 5-phosphate isomerase family. As to quaternary structure, homodimer.

The catalysed reaction is aldehydo-D-ribose 5-phosphate = D-ribulose 5-phosphate. Its pathway is carbohydrate degradation; pentose phosphate pathway; D-ribose 5-phosphate from D-ribulose 5-phosphate (non-oxidative stage): step 1/1. In terms of biological role, catalyzes the reversible conversion of ribose-5-phosphate to ribulose 5-phosphate. This Haloarcula marismortui (strain ATCC 43049 / DSM 3752 / JCM 8966 / VKM B-1809) (Halobacterium marismortui) protein is Ribose-5-phosphate isomerase A.